A 365-amino-acid chain; its full sequence is NAD(P)H-quinone oxidoreductase subunit 1, chloroplastic (365 aa).

6 helical membrane-spanning segments follow: residues L32–L52, Y98–I118, L129–M149, L257–G279, V302–I322, and L338–T358.

The protein belongs to the complex I subunit 1 family. In terms of assembly, NDH is composed of at least 16 different subunits, 5 of which are encoded in the nucleus.

It is found in the plastid. The protein resides in the chloroplast thylakoid membrane. It catalyses the reaction a plastoquinone + NADH + (n+1) H(+)(in) = a plastoquinol + NAD(+) + n H(+)(out). The enzyme catalyses a plastoquinone + NADPH + (n+1) H(+)(in) = a plastoquinol + NADP(+) + n H(+)(out). NDH shuttles electrons from NAD(P)H:plastoquinone, via FMN and iron-sulfur (Fe-S) centers, to quinones in the photosynthetic chain and possibly in a chloroplast respiratory chain. The immediate electron acceptor for the enzyme in this species is believed to be plastoquinone. Couples the redox reaction to proton translocation, and thus conserves the redox energy in a proton gradient. The sequence is that of NAD(P)H-quinone oxidoreductase subunit 1, chloroplastic from Spinacia oleracea (Spinach).